The sequence spans 530 residues: Tegument protein UL21 homolog (530 aa).

Belongs to the alphaherpesvirinae UL21 protein family. As to quaternary structure, interacts (via C-terminus) with UL16.

It localises to the virion tegument. Its subcellular location is the host cytoplasm. The protein resides in the host nucleus. Its function is as follows. May participate in DNA packaging/capsid maturation events. Promotes efficient incorporation of tegument proteins UL46, UL49, and US3 homologs into virions. May also play a role in capsid transport to the trans-Golgi network (TGN). In Equus caballus (Horse), this protein is Tegument protein UL21 homolog.